Reading from the N-terminus, the 297-residue chain is 4,5-DOPA dioxygenase extradiol-like protein (297 aa).

Residues His30, His82, His205, and His263 each coordinate Zn(2+).

Belongs to the DODA-type extradiol aromatic ring-opening dioxygenase family. The cofactor is Zn(2+).

It localises to the cytoplasm. Its subcellular location is the nucleus. May be involved in the metabolism of aromatic compounds. In Schizosaccharomyces pombe (strain 972 / ATCC 24843) (Fission yeast), this protein is 4,5-DOPA dioxygenase extradiol-like protein.